Consider the following 208-residue polypeptide: Uracil phosphoribosyltransferase (208 aa).

5-phospho-alpha-D-ribose 1-diphosphate-binding positions include Arg-78, Arg-103, and 130 to 138 (DPMLATGGS). Residues Ile-193 and 198–200 (GDA) contribute to the uracil site. Position 199 (Asp-199) interacts with 5-phospho-alpha-D-ribose 1-diphosphate.

Belongs to the UPRTase family. Requires Mg(2+) as cofactor.

The catalysed reaction is UMP + diphosphate = 5-phospho-alpha-D-ribose 1-diphosphate + uracil. The protein operates within pyrimidine metabolism; UMP biosynthesis via salvage pathway; UMP from uracil: step 1/1. Allosterically activated by GTP. In terms of biological role, catalyzes the conversion of uracil and 5-phospho-alpha-D-ribose 1-diphosphate (PRPP) to UMP and diphosphate. The sequence is that of Uracil phosphoribosyltransferase from Glaesserella parasuis serovar 5 (strain SH0165) (Haemophilus parasuis).